We begin with the raw amino-acid sequence, 175 residues long: Isopentenyl-diphosphate Delta-isomerase (175 aa).

2 residues coordinate Mn(2+): histidine 23 and histidine 30. The Nudix hydrolase domain maps to 28 to 162; it reads TLHLAFCVFV…PLRYTPWFRR (135 aa). Cysteine 65 is a catalytic residue. Residue histidine 67 participates in Mn(2+) binding. Glutamate 85 is a binding site for Mg(2+). The Mn(2+) site is built by glutamate 111 and glutamate 113. Glutamate 113 is a catalytic residue.

It belongs to the IPP isomerase type 1 family. Requires Mg(2+) as cofactor. It depends on Mn(2+) as a cofactor.

Its subcellular location is the cytoplasm. The catalysed reaction is isopentenyl diphosphate = dimethylallyl diphosphate. Its pathway is isoprenoid biosynthesis; dimethylallyl diphosphate biosynthesis; dimethylallyl diphosphate from isopentenyl diphosphate: step 1/1. Functionally, catalyzes the 1,3-allylic rearrangement of the homoallylic substrate isopentenyl (IPP) to its highly electrophilic allylic isomer, dimethylallyl diphosphate (DMAPP). The polypeptide is Isopentenyl-diphosphate Delta-isomerase (Halorhodospira halophila (strain DSM 244 / SL1) (Ectothiorhodospira halophila (strain DSM 244 / SL1))).